The following is a 546-amino-acid chain: Chaperonin GroEL 2 (546 aa).

ATP contacts are provided by residues 30 to 33 (TLGP), Lys51, 87 to 91 (DGTTT), Gly415, and Asp495. The disordered stretch occupies residues 527-546 (DAAPATAPGGPGAGGPGFDF). Residues 535 to 546 (GGPGAGGPGFDF) are compositionally biased toward gly residues.

The protein belongs to the chaperonin (HSP60) family. In terms of assembly, forms a cylinder of 14 subunits composed of two heptameric rings stacked back-to-back. Interacts with the co-chaperonin GroES.

The protein localises to the cytoplasm. The enzyme catalyses ATP + H2O + a folded polypeptide = ADP + phosphate + an unfolded polypeptide.. Functionally, together with its co-chaperonin GroES, plays an essential role in assisting protein folding. The GroEL-GroES system forms a nano-cage that allows encapsulation of the non-native substrate proteins and provides a physical environment optimized to promote and accelerate protein folding. The sequence is that of Chaperonin GroEL 2 from Burkholderia ambifaria (strain ATCC BAA-244 / DSM 16087 / CCUG 44356 / LMG 19182 / AMMD) (Burkholderia cepacia (strain AMMD)).